A 762-amino-acid chain; its full sequence is Putative BTB/POZ domain-containing protein L272 (762 aa).

A BTB domain is found at 16-86 (TDITIILKDE…FYGQKIKSHN (71 aa)). Acidic residues predominate over residues 390-410 (DLDNSNDLNDSNDLDDSDDSN). 2 disordered regions span residues 390-411 (DLDNSNDLNDSNDLDDSDDSND) and 532-556 (ISDNSDNLNNSDNSDDLDNPDNSDN). Over residues 532 to 543 (ISDNSDNLNNSD) the composition is skewed to low complexity. Positions 737–762 (FSENYCDELINRLNNALKKIEQKYPN) form a coiled coil.

This sequence belongs to the mimivirus BTB/WD family.

The chain is Putative BTB/POZ domain-containing protein L272 from Acanthamoeba polyphaga (Amoeba).